A 434-amino-acid chain; its full sequence is Mitochondrial distribution and morphology protein 12 (434 aa).

The SMP-LTD domain maps to 1 to 434; it reads MSIDIDWERA…VYPSFWTFLV (434 aa). Acidic residues predominate over residues 70-83; the sequence is YEEDDNENFSESSE. Disordered stretches follow at residues 70–141 and 181–275; these read YEED…LRSP and TPLG…DDLP. Residues 86–97 show a composition bias toward basic and acidic residues; that stretch reads SPTREPVDRYGS. Polar residues predominate over residues 215–237; sequence SAQSRPSTANTGNTLLSRGSMSS.

The protein belongs to the MDM12 family. As to quaternary structure, component of the ER-mitochondria encounter structure (ERMES) or MDM complex, composed of MMM1, MDM10, MDM12 and MDM34. An MMM1 homodimer associates with one molecule of MDM12 on each side in a pairwise head-to-tail manner, and the SMP-LTD domains of MMM1 and MDM12 generate a continuous hydrophobic tunnel for phospholipid trafficking.

Its subcellular location is the mitochondrion outer membrane. It localises to the endoplasmic reticulum membrane. Component of the ERMES/MDM complex, which serves as a molecular tether to connect the endoplasmic reticulum (ER) and mitochondria. Components of this complex are involved in the control of mitochondrial shape and protein biogenesis, and function in nonvesicular lipid trafficking between the ER and mitochondria. MDM12 is required for the interaction of the ER-resident membrane protein MMM1 and the outer mitochondrial membrane-resident beta-barrel protein MDM10. The MDM12-MMM1 subcomplex functions in the major beta-barrel assembly pathway that is responsible for biogenesis of all mitochondrial outer membrane beta-barrel proteins, and acts in a late step after the SAM complex. The MDM10-MDM12-MMM1 subcomplex further acts in the TOM40-specific pathway after the action of the MDM12-MMM1 complex. Essential for establishing and maintaining the structure of mitochondria and maintenance of mtDNA nucleoids. The sequence is that of Mitochondrial distribution and morphology protein 12 from Blastomyces gilchristii (strain SLH14081) (Blastomyces dermatitidis).